Reading from the N-terminus, the 248-residue chain is uncharacterized protein (248 aa).

The helical transmembrane segment at Leu30–Ala50 threads the bilayer. 2 disordered regions span residues Asn59–Pro91 and Thr208–Arg248. Composition is skewed to polar residues over residues Glu210–Asn220 and Ser239–Arg248.

Its subcellular location is the membrane. This is an uncharacterized protein from Caenorhabditis elegans.